A 931-amino-acid polypeptide reads, in one-letter code: MWGFWLLLFWGFSGMYRWGMTTLPTLGQTLGGVNECQDTTTCPAYATCTDTTDSYYCTCKRGFLSSNGQTNFQGPGVECQDVNECLQSDSPCGPNSVCTNILGRAKCSCLRGFSSSTGKDWILGSLDNFLCADVDECLTIGICPKYSNCSNSVGSYSCTCQPGFVLNGSICEDEDECVTRDVCPEHATCHNTLGSYYCTCNSGLESSGGGPMFQGLDESCEDVDECSRNSTLCGPTFICINTLGSYSCSCPAGFSLPTFQILGHPADGNCTDIDECDDTCPLNSSCTNTIGSYFCTCHPGFASSNGQLNFKDLEVTCEDIDECTQDPLQCGLNSVCTNVPGSYICGCLPDFQMDPEGSQGYGNFNCKRILFKCKEDLILQSEQIQQCQAVQGRDLGYASFCTLVNATFTILDNTCENKSAPVSLQSAATSVSLVLEQATTWFELSKEETSTLGTILLETVESTMLAALLIPSGNASQMIQTEYLDIESKVINEECKENESINLAARGDKMNVGCFIIKESVSTGAPGVAFVSFAHMESVLNERFFEDGQSFRKLRMNSRVVGGTVTGEKKEDFSKPIIYTLQHIQPKQKSERPICVSWNTDVEDGRWTPSGCEIVEASETHTVCSCNRMANLAIIMASGELTMEFSLYIISHVGTVISLVCLALAIATFLLCRAVQNHNTYMHLHLCVCLFLAKILFLTGIDKTDNQTACAIIAGFLHYLFLACFFWMLVEAVMLFLMVRNLKVVNYFSSRNIKMLHLCAFGYGLPVLVVIISASVQPRGYGMHNRCWLNTETGFIWSFLGPVCMIITINSVLLAWTLWVLRQKLCSVSSEVSKLKDTRLLTFKAIAQIFILGCSWVLGIFQIGPLASIMAYLFTIINSLQGAFIFLIHCLLNRQVRDEYKKLLTRKTDLSSHSQTSGILLSSMPSTSKMG.

Positions 1–27 (MWGFWLLLFWGFSGMYRWGMTTLPTLG) are cleaved as a signal peptide. The Extracellular segment spans residues 28-644 (QTLGGVNECQ…IMASGELTME (617 aa)). 2 EGF-like domains span residues 32–80 (GVNE…VECQ) and 81–132 (DVNE…FLCA). Cystine bridges form between cysteine 36/cysteine 48, cysteine 42/cysteine 57, cysteine 59/cysteine 79, cysteine 85/cysteine 98, cysteine 92/cysteine 107, cysteine 109/cysteine 131, cysteine 137/cysteine 149, cysteine 143/cysteine 158, cysteine 160/cysteine 171, cysteine 177/cysteine 189, cysteine 183/cysteine 198, cysteine 200/cysteine 220, cysteine 226/cysteine 239, cysteine 233/cysteine 248, cysteine 250/cysteine 270, cysteine 276/cysteine 286, cysteine 280/cysteine 295, cysteine 297/cysteine 317, cysteine 323/cysteine 336, cysteine 330/cysteine 345, and cysteine 347/cysteine 366. Residues 133–172 (DVDECLTIGICPKYSNCSNSVGSYSCTCQPGFVLNGSICE) form the EGF-like 3; calcium-binding domain. Asparagine 148 and asparagine 167 each carry an N-linked (GlcNAc...) asparagine glycan. Positions 173-221 (DEDECVTRDVCPEHATCHNTLGSYYCTCNSGLESSGGGPMFQGLDESCE) constitute an EGF-like 4; calcium-binding domain. The EGF-like 5; calcium-binding domain maps to 222–271 (DVDECSRNSTLCGPTFICINTLGSYSCSCPAGFSLPTFQILGHPADGNCT). N-linked (GlcNAc...) asparagine glycosylation occurs at asparagine 229. Asparagine 269 and asparagine 283 each carry an N-linked (GlcNAc...) asparagine glycan. The 47-residue stretch at 272 to 318 (DIDECDDTCPLNSSCTNTIGSYFCTCHPGFASSNGQLNFKDLEVTCE) folds into the EGF-like 6; calcium-binding domain. The EGF-like 7; calcium-binding domain occupies 319–367 (DIDECTQDPLQCGLNSVCTNVPGSYICGCLPDFQMDPEGSQGYGNFNCK). Asparagine 405, asparagine 417, asparagine 474, and asparagine 498 each carry an N-linked (GlcNAc...) asparagine glycan. The 161-residue stretch at 482-642 (EYLDIESKVI…AIIMASGELT (161 aa)) folds into the GAIN-B domain. Positions 506–508 (RGD) match the Cell attachment site motif. Disulfide bonds link cysteine 595-cysteine 624 and cysteine 612-cysteine 626. Positions 595 to 642 (CVSWNTDVEDGRWTPSGCEIVEASETHTVCSCNRMANLAIIMASGELT) are GPS. Residues 645–672 (FSLYIISHVGTVISLVCLALAIATFLLC) form a helical membrane-spanning segment. Topologically, residues 673-679 (RAVQNHN) are cytoplasmic. Residues 680–701 (TYMHLHLCVCLFLAKILFLTGI) form a helical membrane-spanning segment. Residues 702 to 711 (DKTDNQTACA) lie on the Extracellular side of the membrane. Asparagine 706 carries an N-linked (GlcNAc...) asparagine glycan. Residues 712 to 735 (IIAGFLHYLFLACFFWMLVEAVML) form a helical membrane-spanning segment. The Cytoplasmic segment spans residues 736–754 (FLMVRNLKVVNYFSSRNIK). Residues 755-776 (MLHLCAFGYGLPVLVVIISASV) form a helical membrane-spanning segment. Residues 777 to 792 (QPRGYGMHNRCWLNTE) lie on the Extracellular side of the membrane. Residues 793–821 (TGFIWSFLGPVCMIITINSVLLAWTLWVL) form a helical membrane-spanning segment. Residues 822 to 839 (RQKLCSVSSEVSKLKDTR) are Cytoplasmic-facing. Residues 840-859 (LLTFKAIAQIFILGCSWVLG) traverse the membrane as a helical segment. Over 860 to 874 (IFQIGPLASIMAYLF) the chain is Extracellular. Residues 875–897 (TIINSLQGAFIFLIHCLLNRQVR) form a helical membrane-spanning segment. At 898–931 (DEYKKLLTRKTDLSSHSQTSGILLSSMPSTSKMG) the chain is on the cytoplasmic side.

The protein belongs to the G-protein coupled receptor 2 family. Adhesion G-protein coupled receptor (ADGR) subfamily. In terms of tissue distribution, in macrophages; but absent from those which are localized within T-cell areas of lymph nodes and spleen. Low level of expression on blood monocytes.

It localises to the cell membrane. Orphan receptor involved in cell adhesion and probably in cell-cell interactions specifically involving cells of the immune system. May play a role in regulatory T-cells (Treg) development. This is Adhesion G protein-coupled receptor E1 (Adgre1) from Mus musculus (Mouse).